The chain runs to 143 residues: Hemoglobin subunit alpha (143 aa).

One can recognise a Globin domain in the interval serine 2–arginine 143. Residue histidine 60 coordinates O2. Histidine 89 is a heme b binding site.

It belongs to the globin family. In terms of assembly, heterotetramer of two alpha chains and two beta chains. Red blood cells.

Involved in oxygen transport from gills to the various peripheral tissues. This Salmo salar (Atlantic salmon) protein is Hemoglobin subunit alpha (hba).